We begin with the raw amino-acid sequence, 77 residues long: Translation initiation factor IF-1, chloroplastic (77 aa).

An S1-like domain is found at 1 to 71 (MKEQKWIHEG…TRGRIIYRLR (71 aa)).

The protein belongs to the IF-1 family. As to quaternary structure, component of the 30S ribosomal translation pre-initiation complex which assembles on the 30S ribosome in the order IF-2 and IF-3, IF-1 and N-formylmethionyl-tRNA(fMet); mRNA recruitment can occur at any time during PIC assembly.

The protein resides in the plastid. Its subcellular location is the chloroplast. Its function is as follows. One of the essential components for the initiation of protein synthesis. Stabilizes the binding of IF-2 and IF-3 on the 30S subunit to which N-formylmethionyl-tRNA(fMet) subsequently binds. Helps modulate mRNA selection, yielding the 30S pre-initiation complex (PIC). Upon addition of the 50S ribosomal subunit IF-1, IF-2 and IF-3 are released leaving the mature 70S translation initiation complex. The chain is Translation initiation factor IF-1, chloroplastic from Brexia madagascariensis.